The sequence spans 151 residues: Small ribosomal subunit protein uS15 (151 aa).

The interval 1-20 (MARLHSGKRGSSGSTRPLRT) is disordered.

It belongs to the universal ribosomal protein uS15 family. Part of the 30S ribosomal subunit.

This is Small ribosomal subunit protein uS15 from Methanococcus aeolicus (strain ATCC BAA-1280 / DSM 17508 / OCM 812 / Nankai-3).